Reading from the N-terminus, the 179-residue chain is Large ribosomal subunit protein uL5 (179 aa).

This sequence belongs to the universal ribosomal protein uL5 family. Part of the 50S ribosomal subunit; part of the 5S rRNA/L5/L18/L25 subcomplex. Contacts the 5S rRNA and the P site tRNA. Forms a bridge to the 30S subunit in the 70S ribosome.

In terms of biological role, this is one of the proteins that bind and probably mediate the attachment of the 5S RNA into the large ribosomal subunit, where it forms part of the central protuberance. In the 70S ribosome it contacts protein S13 of the 30S subunit (bridge B1b), connecting the 2 subunits; this bridge is implicated in subunit movement. Contacts the P site tRNA; the 5S rRNA and some of its associated proteins might help stabilize positioning of ribosome-bound tRNAs. The polypeptide is Large ribosomal subunit protein uL5 (Xylella fastidiosa (strain 9a5c)).